A 108-amino-acid polypeptide reads, in one-letter code: UPF0060 membrane protein sll0793 (108 aa).

Transmembrane regions (helical) follow at residues 7–27, 32–52, 64–84, and 86–106; these read LYFV…WLWI, SVWL…VATL, YGGI…NVVV, and RLDW…MYAN.

The protein belongs to the UPF0060 family.

The protein localises to the cell inner membrane. The sequence is that of UPF0060 membrane protein sll0793 from Synechocystis sp. (strain ATCC 27184 / PCC 6803 / Kazusa).